The sequence spans 362 residues: tRNA-specific 2-thiouridylase MnmA 1 (362 aa).

ATP contacts are provided by residues 29–36 (AMSGGVDS) and Met55. Cys109 acts as the Nucleophile in catalysis. Cys109 and Cys201 are oxidised to a cystine. Gly133 contributes to the ATP binding site. The interval 151–153 (KDQ) is interaction with tRNA. The active-site Cysteine persulfide intermediate is the Cys201.

The protein belongs to the MnmA/TRMU family.

It is found in the cytoplasm. It carries out the reaction S-sulfanyl-L-cysteinyl-[protein] + uridine(34) in tRNA + AH2 + ATP = 2-thiouridine(34) in tRNA + L-cysteinyl-[protein] + A + AMP + diphosphate + H(+). Its function is as follows. Catalyzes the 2-thiolation of uridine at the wobble position (U34) of tRNA, leading to the formation of s(2)U34. The polypeptide is tRNA-specific 2-thiouridylase MnmA 1 (Fusobacterium nucleatum subsp. nucleatum (strain ATCC 25586 / DSM 15643 / BCRC 10681 / CIP 101130 / JCM 8532 / KCTC 2640 / LMG 13131 / VPI 4355)).